The primary structure comprises 204 residues: High frequency lysogenization protein HflD homolog (204 aa).

Belongs to the HflD family.

The protein localises to the cytoplasm. Its subcellular location is the cell inner membrane. This chain is High frequency lysogenization protein HflD homolog, found in Shewanella amazonensis (strain ATCC BAA-1098 / SB2B).